A 348-amino-acid chain; its full sequence is Phosphate acyltransferase (348 aa).

The protein belongs to the PlsX family. Homodimer. Probably interacts with PlsY.

Its subcellular location is the cytoplasm. It carries out the reaction a fatty acyl-[ACP] + phosphate = an acyl phosphate + holo-[ACP]. Its pathway is lipid metabolism; phospholipid metabolism. Catalyzes the reversible formation of acyl-phosphate (acyl-PO(4)) from acyl-[acyl-carrier-protein] (acyl-ACP). This enzyme utilizes acyl-ACP as fatty acyl donor, but not acyl-CoA. The chain is Phosphate acyltransferase from Neisseria gonorrhoeae (strain ATCC 700825 / FA 1090).